Consider the following 324-residue polypeptide: MSQKTPSPPGELKRDIRALKGASKVARIPVKVEPTTERQRKPHWIRAKAPIGPEVLRLKGLLREHRLHTVCEEASCPNLGECFGHGTATFLIMGNICTRRCPFCDVAHGRPDPLDAEEPMHLAQAIGAMGLRHVVVTSVDRDDLRDGGAAHFTHCIQAIRTQSPQTRIEVLVPDFRGRMDRALEALTAGPPDIFNHNLETVPRLYKAVRPGADYLWSLRLLARFKEDHPTVPTKSGLMLGLGEELAEVEQVMKDLRDHGCDMLTLGQYLQPSLYHLPVRRFVTPEEFDGLGDKAREMGFTHVASGPMVRSSYHADRQAAGESVV.

[4Fe-4S] cluster-binding residues include Cys-71, Cys-76, Cys-82, Cys-97, Cys-101, Cys-104, and Ser-311. Residues 83–300 (FGHGTATFLI…GDKAREMGFT (218 aa)) form the Radical SAM core domain.

The protein belongs to the radical SAM superfamily. Lipoyl synthase family. The cofactor is [4Fe-4S] cluster.

It is found in the cytoplasm. The catalysed reaction is [[Fe-S] cluster scaffold protein carrying a second [4Fe-4S](2+) cluster] + N(6)-octanoyl-L-lysyl-[protein] + 2 oxidized [2Fe-2S]-[ferredoxin] + 2 S-adenosyl-L-methionine + 4 H(+) = [[Fe-S] cluster scaffold protein] + N(6)-[(R)-dihydrolipoyl]-L-lysyl-[protein] + 4 Fe(3+) + 2 hydrogen sulfide + 2 5'-deoxyadenosine + 2 L-methionine + 2 reduced [2Fe-2S]-[ferredoxin]. Its pathway is protein modification; protein lipoylation via endogenous pathway; protein N(6)-(lipoyl)lysine from octanoyl-[acyl-carrier-protein]: step 2/2. In terms of biological role, catalyzes the radical-mediated insertion of two sulfur atoms into the C-6 and C-8 positions of the octanoyl moiety bound to the lipoyl domains of lipoate-dependent enzymes, thereby converting the octanoylated domains into lipoylated derivatives. This chain is Lipoyl synthase, found in Nitrosococcus oceani (strain ATCC 19707 / BCRC 17464 / JCM 30415 / NCIMB 11848 / C-107).